The following is a 285-amino-acid chain: Glutamate racemase (285 aa).

Residues 28–29 (DS) and 60–61 (YG) contribute to the substrate site. Cys-92 functions as the Proton donor/acceptor in the catalytic mechanism. 93-94 (NT) serves as a coordination point for substrate. Cys-204 serves as the catalytic Proton donor/acceptor. 205–206 (TH) is a substrate binding site.

This sequence belongs to the aspartate/glutamate racemases family.

It carries out the reaction L-glutamate = D-glutamate. Its pathway is cell wall biogenesis; peptidoglycan biosynthesis. In terms of biological role, provides the (R)-glutamate required for cell wall biosynthesis. This chain is Glutamate racemase, found in Escherichia coli (strain UTI89 / UPEC).